The following is a 253-amino-acid chain: DnaJ homolog subfamily C member 8 (253 aa).

Ala2 carries the post-translational modification N-acetylalanine. A Phosphoserine modification is found at Ser35. The J domain occupies 57–124 (NPFEVLQIDP…QKKRALDVIQ (68 aa)). Position 146 is an N6-acetyllysine (Lys146). Residues 181–222 (EAKEMHERKRQREEEIEAQEKAKREREWQKNFEESRDGRVDS) are compositionally biased toward basic and acidic residues. The interval 181 to 253 (EAKEMHERKR…PPKVKMEQRE (73 aa)) is disordered. Short sequence motifs (nuclear localization signal) lie at residues 189–192 (KRQR) and 203–206 (KRER). Ser222 carries the post-translational modification Phosphoserine. The span at 231–240 (KGKKEKKNRT) shows a compositional bias: basic residues. The interval 232–253 (GKKEKKNRTFLRPPKVKMEQRE) is essential for polyglutamine aggregation suppression.

In terms of assembly, interacts with SRPK1. Interacts with HSP70 (HSPA1A or HSPA1B).

The protein resides in the nucleus. Its function is as follows. Suppresses polyglutamine (polyQ) aggregation of ATXN3 in neuronal cells. In Mus musculus (Mouse), this protein is DnaJ homolog subfamily C member 8 (Dnajc8).